The sequence spans 521 residues: SET and MYND domain-containing protein DDB_G0292140 (521 aa).

A disordered region spans residues 1–101; that stretch reads MDGVIESPSN…KIKKSKKSIK (101 aa). Low complexity predominate over residues 12-55; sequence TIKISPSTSDSSTTTPIITTPPTQSTATVTTKAAATTTTTEAST. The segment covering 56-65 has biased composition (pro residues); that stretch reads TPPPPQPTPT. Over residues 66–90 the composition is skewed to low complexity; the sequence is PTQSTATVTKEVETTTETIPPIVTK. The span at 91–101 shows a compositional bias: basic residues; sequence GKIKKSKKSIK. An SET domain is found at 122–406; it reads WPIHVYSHPI…EGDELTISYI (285 aa). Positions 167, 170, 188, 191, 197, 201, 209, and 213 each coordinate Zn(2+). The MYND-type zinc-finger motif lies at 167–213; it reads CQHCFLEVPLNQQILPTDFYMCEGCQRVGYCSANCRCIDYSQHRFEC. The disordered stretch occupies residues 442–521; sequence QTGTLEKDDD…QDHQNNDKSN (80 aa). The span at 448-469 shows a compositional bias: acidic residues; it reads KDDDDNDDEKEKMDEDDDEKDD. Residues 470–485 show a composition bias toward basic and acidic residues; sequence DINNKNDKKSKYKSDG. Acidic residues predominate over residues 486–495; the sequence is STDDEEDEDN. The span at 497–514 shows a compositional bias: low complexity; it reads NNKNNNKNKNNNSNNQDH.

It belongs to the class V-like SAM-binding methyltransferase superfamily.

Probable methyltransferase. The protein is SET and MYND domain-containing protein DDB_G0292140 of Dictyostelium discoideum (Social amoeba).